The primary structure comprises 160 residues: Lipoprotein signal peptidase (160 aa).

The next 3 membrane-spanning stretches (helical) occupy residues 7–27 (VIYY…KWLV), 61–81 (GQFW…IIYI), and 91–111 (AGIG…DRVF). Active-site residues include Asp-117 and Asp-135. The chain crosses the membrane as a helical span at residues 133-153 (IADSALTVGVILLFIHMFFFA).

The protein belongs to the peptidase A8 family.

It is found in the cell membrane. It catalyses the reaction Release of signal peptides from bacterial membrane prolipoproteins. Hydrolyzes -Xaa-Yaa-Zaa-|-(S,diacylglyceryl)Cys-, in which Xaa is hydrophobic (preferably Leu), and Yaa (Ala or Ser) and Zaa (Gly or Ala) have small, neutral side chains.. The protein operates within protein modification; lipoprotein biosynthesis (signal peptide cleavage). This protein specifically catalyzes the removal of signal peptides from prolipoproteins. In Geobacillus thermodenitrificans (strain NG80-2), this protein is Lipoprotein signal peptidase.